The primary structure comprises 281 residues: Pantothenate synthetase (281 aa).

30–37 (MGALHHGH) serves as a coordination point for ATP. Histidine 37 serves as the catalytic Proton donor. Glutamine 61 contacts (R)-pantoate. Residue glutamine 61 participates in beta-alanine binding. 147 to 150 (GEKD) contacts ATP. Residue glutamine 153 coordinates (R)-pantoate. ATP is bound by residues leucine 176 and 184–187 (SSSR).

The protein belongs to the pantothenate synthetase family. In terms of assembly, homodimer.

It localises to the cytoplasm. The enzyme catalyses (R)-pantoate + beta-alanine + ATP = (R)-pantothenate + AMP + diphosphate + H(+). It functions in the pathway cofactor biosynthesis; (R)-pantothenate biosynthesis; (R)-pantothenate from (R)-pantoate and beta-alanine: step 1/1. In terms of biological role, catalyzes the condensation of pantoate with beta-alanine in an ATP-dependent reaction via a pantoyl-adenylate intermediate. This chain is Pantothenate synthetase, found in Bartonella bacilliformis (strain ATCC 35685 / KC583 / Herrer 020/F12,63).